Consider the following 234-residue polypeptide: Sugar fermentation stimulation protein homolog (234 aa).

Belongs to the SfsA family.

This chain is Sugar fermentation stimulation protein homolog, found in Shewanella sp. (strain MR-7).